A 263-amino-acid polypeptide reads, in one-letter code: MATKILALLALLALLVSATNAFIIPQCSLAPSASIPQFLPPVTSMGFEHPAVQAYRLQLALAASALQQPIAQLQQQSLAHLTLQTIATQQQQQQFLPSLSHLAVVNPVTYLQQQLLASNPLALANVAAYQQQQQLQQFMPVLSQLAMVNPAVYLQLLSSSPLAVGNAPTYLQQQLLQQIVPALTQLAVANPAAYLQQLLPFNQLAVSNSAAYLQQRQQLLNPLAVANPLVATFLQQQQQLLPYNQFSLMNPALQQPIVGGAIF.

The signal sequence occupies residues 1-21 (MATKILALLALLALLVSATNA).

The protein belongs to the zein family. As to expression, expressed in developing endosperm.

Functionally, zeins are major seed storage proteins. The chain is 22 kDa alpha-zein 16 from Zea mays (Maize).